A 279-amino-acid polypeptide reads, in one-letter code: MEFIEWYPRGYGVAFKVKEKIFEGHSKFQKIEVYETEGFGRLLALDGTVQLVTEGEESYHESLVHPVMLAHPNPRRVLVIGGGDGGTIREVLRHEEVEEAIMVEIDEEVIEVAIKFIGIDGGLLDKMMKGECKRAKLIIGDGVEFIKENSGFDVVIVDSTDPVGPAKMLFSREFYERAYEALNDPGIYVTQAGSVYLFTDELVTAYENMSRVFDKVYAYSFPVIGYASPWAFLVGIKGDLDFRKIDLERAKKLNLKYYDPENHETIFQMPRYVREMLKP.

The region spanning isoleucine 4–lysine 237 is the PABS domain. Residue glutamine 29 participates in S-methyl-5'-thioadenosine binding. Histidine 60 and aspartate 84 together coordinate spermidine. Residues glutamate 104 and aspartate 141–glycine 142 contribute to the S-methyl-5'-thioadenosine site. The Proton acceptor role is filled by aspartate 158. Aspartate 158–aspartate 161 contacts spermidine. S-methyl-5'-thioadenosine is bound at residue proline 165.

Belongs to the spermidine/spermine synthase family. In terms of assembly, homodimer or homotetramer.

It localises to the cytoplasm. The enzyme catalyses S-adenosyl 3-(methylsulfanyl)propylamine + putrescine = S-methyl-5'-thioadenosine + spermidine + H(+). It participates in amine and polyamine biosynthesis; spermidine biosynthesis; spermidine from putrescine: step 1/1. In terms of biological role, catalyzes the irreversible transfer of a propylamine group from the amino donor S-adenosylmethioninamine (decarboxy-AdoMet) to putrescine (1,4-diaminobutane) to yield spermidine. In Pyrococcus abyssi (strain GE5 / Orsay), this protein is Polyamine aminopropyltransferase.